Reading from the N-terminus, the 187-residue chain is uncharacterized protein (187 aa).

The helical transmembrane segment at 3-23 threads the bilayer; the sequence is AIIIFLILFIVGVLIGVGVYY.

The protein resides in the membrane. This is an uncharacterized protein from Methanocaldococcus jannaschii (strain ATCC 43067 / DSM 2661 / JAL-1 / JCM 10045 / NBRC 100440) (Methanococcus jannaschii).